A 375-amino-acid chain; its full sequence is 23S rRNA (uracil(747)-C(5))-methyltransferase RlmC (375 aa).

[4Fe-4S] cluster is bound by residues Cys-3, Cys-11, Cys-14, and Cys-87. The S-adenosyl-L-methionine site is built by Gln-212, Phe-241, Glu-262, and Asn-307. Cys-334 acts as the Nucleophile in catalysis.

This sequence belongs to the class I-like SAM-binding methyltransferase superfamily. RNA M5U methyltransferase family. RlmC subfamily.

The enzyme catalyses uridine(747) in 23S rRNA + S-adenosyl-L-methionine = 5-methyluridine(747) in 23S rRNA + S-adenosyl-L-homocysteine + H(+). Its function is as follows. Catalyzes the formation of 5-methyl-uridine at position 747 (m5U747) in 23S rRNA. This is 23S rRNA (uracil(747)-C(5))-methyltransferase RlmC from Xenorhabdus nematophila (strain ATCC 19061 / DSM 3370 / CCUG 14189 / LMG 1036 / NCIMB 9965 / AN6).